Reading from the N-terminus, the 400-residue chain is CinA-like protein (400 aa).

It belongs to the CinA family.

In Shigella flexneri, this protein is CinA-like protein.